The sequence spans 101 residues: Acylphosphatase (101 aa).

One can recognise an Acylphosphatase-like domain in the interval 12–98 (RAHVFVTGRV…EGLRGFEVKR (87 aa)). Active-site residues include R27 and N45.

It belongs to the acylphosphatase family.

The enzyme catalyses an acyl phosphate + H2O = a carboxylate + phosphate + H(+). This is Acylphosphatase (acyP) from Nostoc sp. (strain PCC 7120 / SAG 25.82 / UTEX 2576).